A 224-amino-acid chain; its full sequence is 7-cyano-7-deazaguanine synthase (224 aa).

Residue 10–20 participates in ATP binding; it reads LSGGLDSATVV. 4 residues coordinate Zn(2+): C189, C199, C202, and C205.

Belongs to the QueC family. Zn(2+) is required as a cofactor.

It catalyses the reaction 7-carboxy-7-deazaguanine + NH4(+) + ATP = 7-cyano-7-deazaguanine + ADP + phosphate + H2O + H(+). Its pathway is purine metabolism; 7-cyano-7-deazaguanine biosynthesis. Its function is as follows. Catalyzes the ATP-dependent conversion of 7-carboxy-7-deazaguanine (CDG) to 7-cyano-7-deazaguanine (preQ(0)). This chain is 7-cyano-7-deazaguanine synthase, found in Pseudomonas putida (strain ATCC 47054 / DSM 6125 / CFBP 8728 / NCIMB 11950 / KT2440).